The following is a 502-amino-acid chain: MYTCPKTCTLTLKFFIDRFHTDYRLSKLAISFFDQKKNKMADSIPVKKKGSAKGPPSFVTPEYIEKQRQKKLEKMAKKAARKPIAPPSNAPPEFNTDFIKREMLSIPNYAPFETEKSALDITIMTYNVLAQTNIRRSMFPHSGEALKWKNRSRMLANELTYYSPTLGCMQEVDAEFVPNFYKKLLGGLGYELHFIKGEGKTHGIMIFWKSSLFKKVQDLTIYYDDHDELPGRMNTKNIGCCVRLERVDDPSRGLFLATTHLFWHPYGSYERLRQGAILVKEVNKMAQSHPSWPVFIAGDFNTEPFDTNFPALTTRPLSICQRATDIIERSMNYVFGESELEEKNASTKTENDSNEDDKEECQSSSTSSVPESTASTPKKRILHVQNDYVPHYRSFYQQHEQNPVLFSLYSVGYKLVHPENAKNTFDHPAFTNWAHAYQGHLDYIFVMNRDTSLQTPENQVVEGIKLKALLRVPLPSEMKEAEPLEGRYPSDHVALMANVQIV.

A disordered region spans residues 338–379 (SELEEKNASTKTENDSNEDDKEECQSSSTSSVPESTASTPKK). Basic and acidic residues predominate over residues 341 to 351 (EEKNASTKTEN). Positions 363–376 (SSSTSSVPESTAST) are enriched in low complexity.

It belongs to the CCR4/nocturin family.

Its subcellular location is the cytoplasm. The protein localises to the nucleus. This is Probable RNA exonuclease C9B6.11c from Schizosaccharomyces pombe (strain 972 / ATCC 24843) (Fission yeast).